Consider the following 460-residue polypeptide: A-type ATP synthase subunit B 1 (460 aa).

Belongs to the ATPase alpha/beta chains family. As to quaternary structure, has multiple subunits with at least A(3), B(3), C, D, E, F, H, I and proteolipid K(x).

It localises to the cell membrane. Its function is as follows. Component of the A-type ATP synthase that produces ATP from ADP in the presence of a proton gradient across the membrane. The B chain is a regulatory subunit. This chain is A-type ATP synthase subunit B 1, found in Methanospirillum hungatei JF-1 (strain ATCC 27890 / DSM 864 / NBRC 100397 / JF-1).